Reading from the N-terminus, the 267-residue chain is tRNA pseudouridine synthase A (267 aa).

The active-site Nucleophile is aspartate 51. Tyrosine 109 lines the substrate pocket.

This sequence belongs to the tRNA pseudouridine synthase TruA family. As to quaternary structure, homodimer.

The catalysed reaction is uridine(38/39/40) in tRNA = pseudouridine(38/39/40) in tRNA. Its function is as follows. Formation of pseudouridine at positions 38, 39 and 40 in the anticodon stem and loop of transfer RNAs. The chain is tRNA pseudouridine synthase A from Staphylococcus epidermidis (strain ATCC 35984 / DSM 28319 / BCRC 17069 / CCUG 31568 / BM 3577 / RP62A).